A 146-amino-acid chain; its full sequence is Ribosome maturation factor RimP (146 aa).

It belongs to the RimP family.

The protein localises to the cytoplasm. Required for maturation of 30S ribosomal subunits. This is Ribosome maturation factor RimP from Dechloromonas aromatica (strain RCB).